The sequence spans 205 residues: Probable peptidyl-tRNA hydrolase 2 (205 aa).

The segment covering 40-49 (YSSKNANKAS) has biased composition (polar residues). The disordered stretch occupies residues 40-68 (YSSKNANKASNPEKESPVSVSNDEDSESE). Serine 65 and serine 79 each carry phosphoserine.

The protein belongs to the PTH2 family.

The enzyme catalyses an N-acyl-L-alpha-aminoacyl-tRNA + H2O = an N-acyl-L-amino acid + a tRNA + H(+). In terms of biological role, the natural substrate for this enzyme may be peptidyl-tRNAs which drop off the ribosome during protein synthesis. In Schizosaccharomyces pombe (strain 972 / ATCC 24843) (Fission yeast), this protein is Probable peptidyl-tRNA hydrolase 2.